We begin with the raw amino-acid sequence, 257 residues long: Imidazole glycerol phosphate synthase subunit HisF (257 aa).

Active-site residues include Asp-11 and Asp-130.

Belongs to the HisA/HisF family. In terms of assembly, heterodimer of HisH and HisF.

It is found in the cytoplasm. It catalyses the reaction 5-[(5-phospho-1-deoxy-D-ribulos-1-ylimino)methylamino]-1-(5-phospho-beta-D-ribosyl)imidazole-4-carboxamide + L-glutamine = D-erythro-1-(imidazol-4-yl)glycerol 3-phosphate + 5-amino-1-(5-phospho-beta-D-ribosyl)imidazole-4-carboxamide + L-glutamate + H(+). Its pathway is amino-acid biosynthesis; L-histidine biosynthesis; L-histidine from 5-phospho-alpha-D-ribose 1-diphosphate: step 5/9. Functionally, IGPS catalyzes the conversion of PRFAR and glutamine to IGP, AICAR and glutamate. The HisF subunit catalyzes the cyclization activity that produces IGP and AICAR from PRFAR using the ammonia provided by the HisH subunit. The chain is Imidazole glycerol phosphate synthase subunit HisF from Photobacterium profundum (strain SS9).